Here is a 109-residue protein sequence, read N- to C-terminus: MKLAIDCPDCRKMILALPRRAGRGAIWLYRHSLSPLVGYHCRHLPTCSSYGDEAIERFGLWAGGWMTLARLLRCQPWGTHGIDNVPLTAPAGARWYLPWRYARWRGVNG.

Belongs to the UPF0161 family.

It is found in the cell inner membrane. Could be involved in insertion of integral membrane proteins into the membrane. This is Putative membrane protein insertion efficiency factor from Rhodopseudomonas palustris (strain BisB18).